Reading from the N-terminus, the 468-residue chain is Siroheme synthase (468 aa).

The tract at residues 1-203 (MQYLPIFLNI…GQEEEAEGAL (203 aa)) is precorrin-2 dehydrogenase /sirohydrochlorin ferrochelatase. Residues 22–23 (TV) and 43–44 (PK) contribute to the NAD(+) site. Serine 128 carries the post-translational modification Phosphoserine. The uroporphyrinogen-III C-methyltransferase stretch occupies residues 216-468 (GEVYLVGAGP…VPDREPLDAR (253 aa)). Position 225 (proline 225) interacts with S-adenosyl-L-methionine. Aspartate 248 (proton acceptor) is an active-site residue. Lysine 270 serves as the catalytic Proton donor. Residues 301 to 303 (GGD), isoleucine 306, 331 to 332 (TA), methionine 383, and glycine 412 contribute to the S-adenosyl-L-methionine site.

In the N-terminal section; belongs to the precorrin-2 dehydrogenase / sirohydrochlorin ferrochelatase family. The protein in the C-terminal section; belongs to the precorrin methyltransferase family.

The enzyme catalyses uroporphyrinogen III + 2 S-adenosyl-L-methionine = precorrin-2 + 2 S-adenosyl-L-homocysteine + H(+). The catalysed reaction is precorrin-2 + NAD(+) = sirohydrochlorin + NADH + 2 H(+). It catalyses the reaction siroheme + 2 H(+) = sirohydrochlorin + Fe(2+). It functions in the pathway cofactor biosynthesis; adenosylcobalamin biosynthesis; precorrin-2 from uroporphyrinogen III: step 1/1. The protein operates within cofactor biosynthesis; adenosylcobalamin biosynthesis; sirohydrochlorin from precorrin-2: step 1/1. Its pathway is porphyrin-containing compound metabolism; siroheme biosynthesis; precorrin-2 from uroporphyrinogen III: step 1/1. It participates in porphyrin-containing compound metabolism; siroheme biosynthesis; siroheme from sirohydrochlorin: step 1/1. It functions in the pathway porphyrin-containing compound metabolism; siroheme biosynthesis; sirohydrochlorin from precorrin-2: step 1/1. In terms of biological role, multifunctional enzyme that catalyzes the SAM-dependent methylations of uroporphyrinogen III at position C-2 and C-7 to form precorrin-2 via precorrin-1. Then it catalyzes the NAD-dependent ring dehydrogenation of precorrin-2 to yield sirohydrochlorin. Finally, it catalyzes the ferrochelation of sirohydrochlorin to yield siroheme. In Nitrosococcus oceani (strain ATCC 19707 / BCRC 17464 / JCM 30415 / NCIMB 11848 / C-107), this protein is Siroheme synthase.